Consider the following 269-residue polypeptide: Putative phosphoenolpyruvate synthase regulatory protein (269 aa).

Residue 149–156 participates in ADP binding; sequence GVSRSGKT.

The protein belongs to the pyruvate, phosphate/water dikinase regulatory protein family. PSRP subfamily.

It catalyses the reaction [pyruvate, water dikinase] + ADP = [pyruvate, water dikinase]-phosphate + AMP + H(+). The enzyme catalyses [pyruvate, water dikinase]-phosphate + phosphate + H(+) = [pyruvate, water dikinase] + diphosphate. In terms of biological role, bifunctional serine/threonine kinase and phosphorylase involved in the regulation of the phosphoenolpyruvate synthase (PEPS) by catalyzing its phosphorylation/dephosphorylation. The sequence is that of Putative phosphoenolpyruvate synthase regulatory protein from Colwellia psychrerythraea (strain 34H / ATCC BAA-681) (Vibrio psychroerythus).